We begin with the raw amino-acid sequence, 648 residues long: Mitochondrial Rho GTPase 1 (648 aa).

The Cytoplasmic portion of the chain corresponds to 1 to 619 (MARYAAGAVD…KHYNRLINRS (619 aa)). Ser-14 carries the phosphoserine modification. One can recognise a Miro 1 domain in the interval 15–182 (PKSVRIVVVG…FYYAQKTVLH (168 aa)). 2 consecutive EF-hand domains span residues 198–233 (RCVR…CFHA) and 319–354 (AAID…APES). Asp-211, Asp-213, Asp-215, Glu-222, Asp-332, Asp-334, Asp-336, Asn-338, and Glu-343 together coordinate Ca(2+). In terms of domain architecture, Miro 2 spans 427–595 (RKVFQCFVFG…FRKILTAAQH (169 aa)). The helical transmembrane segment at 620–640 (LMAVSIGAAAVVVGLAAYRVY) threads the bilayer. The Mitochondrial intermembrane portion of the chain corresponds to 641–648 (ATRKSSSA).

The protein belongs to the mitochondrial Rho GTPase family. In terms of tissue distribution, expressed in roots, leaves, stems, flowers and siliques.

The protein localises to the mitochondrion outer membrane. Its function is as follows. Mitochondrial GTPase required to maintain proper development, morphology and intracellular distribution of mitochondria, which in turn are essential for the progress of embryonic cell division, development of haploid male and female gametes, and pollen tube growth. In Arabidopsis thaliana (Mouse-ear cress), this protein is Mitochondrial Rho GTPase 1.